Here is a 915-residue protein sequence, read N- to C-terminus: Transferrin-binding protein A (915 aa).

An N-terminal signal peptide occupies residues 1–24 (MQQQHLFRFNILCLSLMTALPAYA). The Periplasmic segment spans residues 25–187 (ENVQAGQAQE…ADDVIGEGRQ (163 aa)). The short motif at 38 to 45 (DTIQVKAK) is the TonB box element. The 126-residue stretch at 51–176 (RDNEVTGLGK…LAGSVAFQTK (126 aa)) folds into the TBDR plug domain. The segment at 121–139 (SYTAQAALGGTRTAGSSGA) is plug loop, interacts with transferrin. One can recognise a TBDR beta-barrel domain in the interval 187–915 (QWGIQSKTAY…NYTFSLEMKF (729 aa)). Residues 188-197 (WGIQSKTAYS) traverse the membrane as a beta stranded segment. Topologically, residues 198 to 203 (GKNRGL) are extracellular. The beta stranded transmembrane segment at 204–213 (TQSIALAGRI) threads the bilayer. At 214-215 (GG) the chain is on the periplasmic side. Residues 216-225 (AEALLIHTGR) traverse the membrane as a beta stranded segment. The Extracellular portion of the chain corresponds to 226-309 (RAGEIRAHED…FLADPLSYES (84 aa)). Residues 310–319 (RSWLFRPGFR) form a beta stranded membrane-spanning segment. The Periplasmic segment spans residues 320–324 (FENKR). A beta stranded transmembrane segment spans residues 325–334 (HYIGGILEHT). The Extracellular portion of the chain corresponds to 335-406 (QQTFDTRDMT…VFYDETHTKS (72 aa)). Residues 351–361 (KAVFDANKKQA) form an L3 helix finger, interacts with transferrin region. A beta stranded membrane pass occupies residues 407–415 (RYGLEYVYT). Over 416-423 (NADKDTWA) the chain is Periplasmic. Residues 424-433 (DYARLSYDRQ) traverse the membrane as a beta stranded segment. At 434–478 (GIGLDNHFQQTHCSADGSDKYCRPSADKPFSYYKSDRVIYGESHR) the chain is on the extracellular side. A beta stranded transmembrane segment spans residues 479 to 488 (LLQAAFKKSF). The Periplasmic segment spans residues 489–494 (DTAKIR). The beta stranded transmembrane segment at 495 to 504 (HNLSVNLGFD) threads the bilayer. At 505 to 583 (RFGSNLRHQD…PRSINGKSYY (79 aa)) the chain is on the extracellular side. The disordered stretch occupies residues 523–542 (AYSSNTPPQNNGKKISPNGS). The beta stranded transmembrane segment at 584 to 592 (AAVRDNVRL) threads the bilayer. The Periplasmic portion of the chain corresponds to 593–594 (GR). A beta stranded membrane pass occupies residues 595–603 (WADVGAGLR). Residues 604-623 (YDYRSTHSDDGSVSTGTHRT) are Extracellular-facing. The chain crosses the membrane as a beta stranded span at residues 624-633 (LSWNAGIVLK). The Periplasmic portion of the chain corresponds to 634 to 637 (PTDW). Residues 638 to 647 (LDLTYRTSTG) form a beta stranded membrane-spanning segment. Residues 648-675 (FRLPSFAEMYGWRAGVQSKAVKIDPEKS) are Extracellular-facing. Residues 676 to 685 (FNKEAGIVFK) traverse the membrane as a beta stranded segment. Residues 686–689 (GDFG) lie on the Periplasmic side of the membrane. A beta stranded transmembrane segment spans residues 690–699 (NLEASWFNNA). The Extracellular segment spans residues 700-733 (YRDLIVRGYEAQIKDGKEEAKGDPAYLNAQSARI). Residues 734–743 (TGINILGKID) traverse the membrane as a beta stranded segment. The Periplasmic portion of the chain corresponds to 744–755 (WNGVWDKLPEGW). Residues 756–765 (YSTFAYNRVR) traverse the membrane as a beta stranded segment. The Extracellular segment spans residues 766–790 (VRDIKKRADRTDIQSHLFDAIQPSR). The chain crosses the membrane as a beta stranded span at residues 791–799 (YVVGLGYDQ). Topologically, residues 800 to 802 (PEG) are periplasmic. The chain crosses the membrane as a beta stranded span at residues 803–811 (KWGVNGMLT). The Extracellular portion of the chain corresponds to 812-845 (YSKAKEITELLGSRALLNGNSRNTKATARRTRPW). Residues 846–855 (YIVDVSGYYT) traverse the membrane as a beta stranded segment. Over 856-860 (VKKHF) the chain is Periplasmic. Residues 861 to 870 (TLRAGVYNLL) form a beta stranded membrane-spanning segment. Over 871–905 (NYRYVTWENVRQTAGGAVNQHKNVGVYNRYAAPGR) the chain is Extracellular. The TonB C-terminal box motif lies at 898–915 (NRYAAPGRNYTFSLEMKF). The beta stranded transmembrane segment at 906-915 (NYTFSLEMKF) threads the bilayer.

Belongs to the TonB-dependent receptor family. As to quaternary structure, binds both human apo- and holo-transferrin (TF), via the TF C-terminus. Forms a large complex with TF and TbpB.

The protein localises to the cell outer membrane. Its function is as follows. Neisseria acquires iron by extracting it from serum transferrin (TF) in its human host. Acts as a TF receptor and is required for TF utilization. Binds both apo- and holo-TF, via the TF C-terminus. The polypeptide is Transferrin-binding protein A (Neisseria meningitidis serogroup B (strain ATCC BAA-335 / MC58)).